Here is a 62-residue protein sequence, read N- to C-terminus: Temporin-La (62 aa).

The signal sequence occupies residues 1–22 (MFPLKKSLLLLFFLGTINLSFC). Residues 23–47 (EEERDVDQDERRDDPGERNVQVEKR) constitute a propeptide that is removed on maturation. Leucine amide is present on leucine 60.

It belongs to the frog skin active peptide (FSAP) family. Temporin subfamily. Expressed by the skin glands.

The protein localises to the secreted. Its subcellular location is the target cell membrane. Functionally, antimicrobial peptide with amphipathic alpha-helical structure that acts against both Gram-positive and Gram-negative bacteria and the fungus Candida albicans. Is active against S.aureus ATCC 25923 (MIC=2.5 ug/ml), S.suis 2 CVCC 606 (MIC=15.6 ug/ml), Salmonella ATCC 20020 (MIC=15.6 ug/ml), P.aeruginosa ATCC 227853 (MIC=60 ug/ml), and C.albicans ATCC10231 (MIC=31.25 ug/ml). Is not active against B.subtilis ADB403, E.coli ATCC 25922, and K.pneumoniae ATCC 700603. Also shows a strong antitumor activity, but no hemolytic activity. In Aquarana catesbeiana (American bullfrog), this protein is Temporin-La.